A 317-amino-acid polypeptide reads, in one-letter code: Electron transfer flavoprotein subunit alpha (317 aa).

Belongs to the ETF alpha-subunit/FixB family. Heterodimer of an alpha and a beta subunit. It depends on FAD as a cofactor.

It is found in the cytoplasm. The protein operates within lipid metabolism; butanoate metabolism. Part of an electron transfer flavoprotein involved in syntrophic growth of S.wolfei with butyrate. Probably receives electrons from butyryl-CoA dehydrogenases, and transfers them to the membrane-bound quinone oxidoreductase Swol_0698. The chain is Electron transfer flavoprotein subunit alpha from Syntrophomonas wolfei subsp. wolfei (strain DSM 2245B / Goettingen).